Consider the following 99-residue polypeptide: Nucleoid-associated protein LCABL_24440 (99 aa).

It belongs to the YbaB/EbfC family. In terms of assembly, homodimer.

The protein resides in the cytoplasm. It localises to the nucleoid. Its function is as follows. Binds to DNA and alters its conformation. May be involved in regulation of gene expression, nucleoid organization and DNA protection. In Lacticaseibacillus casei (strain BL23) (Lactobacillus casei), this protein is Nucleoid-associated protein LCABL_24440.